The sequence spans 157 residues: Baculoviral IAP repeat-containing protein 5.2-A (157 aa).

The BIR repeat unit spans residues Arg-31–Ala-101. Phosphothreonine; by CDK1 is present on Thr-47. Zn(2+) contacts are provided by Cys-70, Cys-73, His-90, and Cys-97.

The protein belongs to the IAP family. In terms of assembly, component of the CPC at least composed of survivin/birc5, incenp, cdca8/borealin and/or cdca9/dasra-A, and aurkb/aurora-B. Interacts directly with incenp (via N-terminus). Interacts with rxra; the interaction is stronger in the absence of 9-cis retinoic acids. Ubiquitination is required for centrosome-targeting. Highly expressed in vascular endothelial cells of tadpoles.

It is found in the cytoplasm. Its subcellular location is the nucleus. The protein localises to the chromosome. It localises to the centromere. The protein resides in the cytoskeleton. It is found in the spindle. Its function is as follows. Component of the chromosomal passenger complex (CPC), a complex that acts as a key regulator of mitosis. The CPC complex has essential functions at the centromere in ensuring correct chromosome alignment and segregation and is required for chromatin-induced microtubule stabilization and spindle assembly. Does not appear to exhibit anti-apoptotic activity. Plays a role in increasing blood vessel size during development. The protein is Baculoviral IAP repeat-containing protein 5.2-A (birc5.2-a) of Xenopus laevis (African clawed frog).